A 289-amino-acid polypeptide reads, in one-letter code: G1/S-specific cyclin-D2 (289 aa).

Residues 26–151 form the Cyclin N-terminal domain; it reads LQNLLTIEER…VLGKLKWNLA (126 aa). The tract at residues 264-289 is disordered; that stretch reads QHNAGSKSVEDPDQATTPTDVRDVDL. Residue S271 is modified to Phosphoserine. Phosphothreonine is present on T280.

This sequence belongs to the cyclin family. Cyclin D subfamily. Interacts with either CDK4 or CDK6 protein kinase to form a serine/threonine kinase holoenzyme complex. The cyclin subunit imparts substrate specificity to the complex. Phosphorylation at Thr-280 by MAP kinases is required for ubiquitination and degradation by the DCX(AMBRA1) complex. Post-translationally, ubiquitinated by the DCX(AMBRA1) complex during the transition from G1 to S cell phase, leading to its degradation: ubiquitination is dependent on Thr-280 phosphorylation. The DCX(AMBRA1) complex represents the major regulator of CCND2 stability during the G1/S transition. Polyubiquitinated by the SCF(FBXL2) complex, leading to proteasomal degradation.

It is found in the nucleus. Its subcellular location is the cytoplasm. The protein localises to the nucleus membrane. Its function is as follows. Regulatory component of the cyclin D2-CDK4 (DC) complex that phosphorylates and inhibits members of the retinoblastoma (RB) protein family including RB1 and regulates the cell-cycle during G(1)/S transition. Phosphorylation of RB1 allows dissociation of the transcription factor E2F from the RB/E2F complex and the subsequent transcription of E2F target genes which are responsible for the progression through the G(1) phase. Hypophosphorylates RB1 in early G(1) phase. Cyclin D-CDK4 complexes are major integrators of various mitogenenic and antimitogenic signals. This is G1/S-specific cyclin-D2 from Mus musculus (Mouse).